Reading from the N-terminus, the 1017-residue chain is Pikachurin (1017 aa).

The signal sequence occupies residues 1–24; the sequence is MDLIRGVLLRLLLLASSLGPGAVS. 2 consecutive Fibronectin type-III domains span residues 37-136 and 144-239; these read PPLD…TLSQ and APQQ…TLCP. N-linked (GlcNAc...) asparagine glycosylation occurs at N47. The 39-residue stretch at 343-381 folds into the EGF-like 1 domain; it reads FDMPCDETLCSADSFCVNDYTWGGSRCQCTLGKGGESCS. Cystine bridges form between C347–C358, C352–C369, C371–C380, C534–C564, C569–C580, C574–C590, C592–C601, C788–C799, C793–C808, C810–C819, and C987–C1014. Residues 386–564 enclose the Laminin G-like 1 domain; sequence IQYPQFFGHS…ALSGADVGEC (179 aa). EGF-like domains are found at residues 565 to 602 and 784 to 820; these read SSGI…RHCE and AAHP…LHCQ. In terms of domain architecture, Laminin G-like 2 spans 609–788; the sequence is IPQFRESLRS…VNVENAAHPC (180 aa). The 180-residue stretch at 835-1014 folds into the Laminin G-like 3 domain; it reads IEIPQFIGRS…AVDGKNINTC (180 aa).

Interacts with DAG1 alpha-dystroglycan. Interacts with GPR158 and GPR179; transsynaptic interaction is required for synaptic organization of photoreceptor cells. In terms of processing, O-glycosylated; contains chondroitin sulfate and heparan sulfate.

It localises to the secreted. It is found in the extracellular space. Its subcellular location is the extracellular matrix. The protein resides in the synaptic cleft. The protein localises to the presynaptic active zone. In terms of biological role, involved in both the retinal photoreceptor ribbon synapse formation and physiological functions of visual perception. Plays a key role in the synaptic organization of photoreceptors by mediating transsynaptic interaction between alpha-dystroglycan and GPR179 on the postsynaptic membrane. Necessary for proper bipolar dendritic tip apposition to the photoreceptor ribbon synapse. Promotes matrix assembly and cell adhesiveness. This chain is Pikachurin (EGFLAM), found in Homo sapiens (Human).